Reading from the N-terminus, the 1156-residue chain is Nuclear pore-associated protein 1 (1156 aa).

Disordered regions lie at residues 1–60 (MGNL…RRPS), 155–204 (EGPR…FRCS), 219–266 (NSMS…PEPA), 481–515 (GGSY…TRES), 680–703 (TLVN…MHTT), 732–786 (NTQP…KTSL), 872–915 (STSF…SSFI), and 1026–1046 (APGP…SGTP). The segment covering 50-59 (LFRRNARRRP) has biased composition (basic residues). The span at 156-165 (GPRRVKKDED) shows a compositional bias: basic and acidic residues. Polar residues-rich tracts occupy residues 179–197 (PLSS…TQGD) and 219–231 (NSMS…SPAS). Polar residues-rich tracts occupy residues 680–692 (TLVN…SSSK), 732–750 (NTQP…SLPA), 884–915 (TTTS…SSFI), and 1028–1046 (GPSS…SGTP).

As to quaternary structure, associates with the nuclear pore complex (NPC). In terms of tissue distribution, testis-specific in adults. In fetal brain expressed only from the paternal allele.

It is found in the nucleus. It localises to the nucleoplasm. The protein resides in the nucleus inner membrane. May be involved in spermatogenesis. In Homo sapiens (Human), this protein is Nuclear pore-associated protein 1 (NPAP1).